Here is a 392-residue protein sequence, read N- to C-terminus: Phosphoglycerate kinase (392 aa).

Residues 21–23, arginine 36, 59–62, arginine 114, and arginine 147 each bind substrate; these read DLN and HLGR. ATP-binding positions include lysine 198, glutamate 320, and 346–349; that span reads GGDT.

The protein belongs to the phosphoglycerate kinase family. In terms of assembly, monomer.

The protein resides in the cytoplasm. It catalyses the reaction (2R)-3-phosphoglycerate + ATP = (2R)-3-phospho-glyceroyl phosphate + ADP. It participates in carbohydrate degradation; glycolysis; pyruvate from D-glyceraldehyde 3-phosphate: step 2/5. This Nitrosomonas eutropha (strain DSM 101675 / C91 / Nm57) protein is Phosphoglycerate kinase.